The following is a 433-amino-acid chain: Enolase (433 aa).

A (2R)-2-phosphoglycerate-binding site is contributed by Gln167. Glu209 (proton donor) is an active-site residue. Mg(2+) is bound by residues Asp246, Glu291, and Asp318. Lys343, Arg372, Ser373, and Lys394 together coordinate (2R)-2-phosphoglycerate. Lys343 acts as the Proton acceptor in catalysis.

It belongs to the enolase family. As to quaternary structure, component of the RNA degradosome, a multiprotein complex involved in RNA processing and mRNA degradation. It depends on Mg(2+) as a cofactor.

Its subcellular location is the cytoplasm. It is found in the secreted. The protein resides in the cell surface. It catalyses the reaction (2R)-2-phosphoglycerate = phosphoenolpyruvate + H2O. The protein operates within carbohydrate degradation; glycolysis; pyruvate from D-glyceraldehyde 3-phosphate: step 4/5. Catalyzes the reversible conversion of 2-phosphoglycerate (2-PG) into phosphoenolpyruvate (PEP). It is essential for the degradation of carbohydrates via glycolysis. This is Enolase from Aeromonas hydrophila subsp. hydrophila (strain ATCC 7966 / DSM 30187 / BCRC 13018 / CCUG 14551 / JCM 1027 / KCTC 2358 / NCIMB 9240 / NCTC 8049).